The sequence spans 409 residues: Elongation factor Tu, plastid (409 aa).

The region spanning 10-214 (KPHINIGTIG…SVDSYIPTPV (205 aa)) is the tr-type G domain. Residues 19-26 (GHVDHGKT) form a G1 region. 19 to 26 (GHVDHGKT) provides a ligand contact to GTP. T26 is a Mg(2+) binding site. Residues 60–64 (GITIN) form a G2 region. Positions 81 to 84 (DCPG) are G3. Residues 81-85 (DCPGH) and 136-139 (NKED) each bind GTP. A G4 region spans residues 136-139 (NKED). The interval 174–176 (SAL) is G5.

The protein belongs to the TRAFAC class translation factor GTPase superfamily. Classic translation factor GTPase family. EF-Tu/EF-1A subfamily.

The protein resides in the plastid. It carries out the reaction GTP + H2O = GDP + phosphate + H(+). GTP hydrolase that promotes the GTP-dependent binding of aminoacyl-tRNA to the A-site of ribosomes during protein biosynthesis. This chain is Elongation factor Tu, plastid (tufA), found in Helicosporidium sp. subsp. Simulium jonesii (Green alga).